The sequence spans 378 residues: Putative glutamate--cysteine ligase 2 (378 aa).

It belongs to the glutamate--cysteine ligase type 2 family. YbdK subfamily.

The enzyme catalyses L-cysteine + L-glutamate + ATP = gamma-L-glutamyl-L-cysteine + ADP + phosphate + H(+). In terms of biological role, ATP-dependent carboxylate-amine ligase which exhibits weak glutamate--cysteine ligase activity. The protein is Putative glutamate--cysteine ligase 2 of Salinispora tropica (strain ATCC BAA-916 / DSM 44818 / JCM 13857 / NBRC 105044 / CNB-440).